Consider the following 510-residue polypeptide: NAD(P)H-quinone oxidoreductase subunit 2, chloroplastic (510 aa).

A run of 12 helical transmembrane segments spans residues 24 to 44 (LLLF…GLIL), 59 to 79 (WFYF…LFRW), 99 to 119 (IFQF…VEYI), 124 to 144 (MAIT…MFLC), 149 to 169 (LITI…LSGY), 183 to 203 (YLLM…WLYG), 229 to 249 (ISIA…PAPF), 295 to 315 (WHLL…LIAI), 323 to 343 (MLAY…IVGD), 347 to 367 (GYAS…GTFA), 395 to 415 (ALSS…AGFF), and 418 to 438 (LHLF…IGLL).

This sequence belongs to the complex I subunit 2 family. As to quaternary structure, NDH is composed of at least 16 different subunits, 5 of which are encoded in the nucleus.

It localises to the plastid. Its subcellular location is the chloroplast thylakoid membrane. The catalysed reaction is a plastoquinone + NADH + (n+1) H(+)(in) = a plastoquinol + NAD(+) + n H(+)(out). It carries out the reaction a plastoquinone + NADPH + (n+1) H(+)(in) = a plastoquinol + NADP(+) + n H(+)(out). Functionally, NDH shuttles electrons from NAD(P)H:plastoquinone, via FMN and iron-sulfur (Fe-S) centers, to quinones in the photosynthetic chain and possibly in a chloroplast respiratory chain. The immediate electron acceptor for the enzyme in this species is believed to be plastoquinone. Couples the redox reaction to proton translocation, and thus conserves the redox energy in a proton gradient. The protein is NAD(P)H-quinone oxidoreductase subunit 2, chloroplastic of Allium textile (Textile onion).